Here is a 346-residue protein sequence, read N- to C-terminus: MYIDTGIMSNNIFLFAFFALVGLTRIEAMPTKGSEGTWNVDYEDQEHTGITCRENEHYNSTRIECEDECNDRNNKLCYRFQQFCWCNEGYIRNSSHICVKLEDCLKDEEQKSETLASSANNDSSKRLEDDLKLFSHDSVSHTSLEPETQAQKFNGIIDQETLDLVFGKPENSSADNKPLETKTQAQKFNGIINEETLDLVFGKPENSWAENKPLETKTQAQKFNGIINEETLDLVFGKPENSWAENKPLETETQAQKFNGIINEETLDLVFGKPENSWAENKPLETKTQAQKFNGIINEETLDLVFGKPENSWAENKPLETKTQTQKFNGIIDQYTRRIVFVFSNI.

A signal peptide spans 1-28 (MYIDTGIMSNNIFLFAFFALVGLTRIEA). The TIL domain occupies 52–104 (CRENEHYNSTRIECEDECNDRNNKLCYRFQQFCWCNEGYIRNSSHICVKLEDC).

The protein belongs to the polydnaviridae EGF-like motif protein family. As to quaternary structure, interacts with host PAP1, PAP3 and SPH2.

Functionally, counteracts the host humoral immune response by inhibiting the processing and the amidolytic activity of host PAP1 and PAP3. Thereby, melanization of host hemolymph, normally producing several reactive intermediates toxic for viruses, is deregulated and proper immune response cannot occur. The protein is Protease inhibitor Egf1.5b (O5) of Microplitis demolitor (Parasitoid wasp).